Consider the following 170-residue polypeptide: Calcineurin subunit B type 1 (170 aa).

EF-hand domains lie at 18-46, 50-85, 87-122, and 128-163; these read DEIR…FMSL, QQNP…FSVR, DKLS…MVGN, and QLQQ…TDIH. Ca(2+) is bound by residues Asp31, Asp33, Ser35, Glu42, Asp63, Asp65, Asn67, Glu69, Glu74, Asp100, Asp102, Asp104, Tyr106, Glu111, Asp141, Asp143, Asp145, Lys147, and Glu152.

Belongs to the calcineurin regulatory subunit family. Composed of two components (A and B), the A component is the catalytic subunit and the B component confers calcium sensitivity.

Calcineurin is a calcium-binding and calmodulin-binding protein found in all cells from yeast to mammals, and a calcium-dependent, calmodulin-stimulated protein phosphatase. This is Calcineurin subunit B type 1 (CanB) from Drosophila melanogaster (Fruit fly).